A 126-amino-acid chain; its full sequence is C-type natriuretic peptide (126 aa).

Positions Met-1–Ala-23 are cleaved as a signal peptide. Positions Arg-19–Leu-71 are disordered. Residues Lys-24–Arg-73 constitute a propeptide that is removed on maturation. Residues Gly-26–Pro-35 are compositionally biased toward pro residues. A disulfide bond links Cys-110 and Cys-126.

The protein belongs to the natriuretic peptide family. Post-translationally, degraded by IDE (in vitro). As to expression, expressed exclusively in brain.

The protein localises to the secreted. Its function is as follows. Hormone which plays a role in endochondral ossification through regulation of cartilaginous growth plate chondrocytes proliferation and differentiation. May also be vasoactive and natriuretic. Acts by specifically binding and stimulating NPR2 to produce cGMP. Binds the clearance receptor NPR3. This chain is C-type natriuretic peptide (Nppc), found in Rattus norvegicus (Rat).